We begin with the raw amino-acid sequence, 519 residues long: O-fucosyltransferase 31 (519 aa).

Residues 18–38 (ALAGVFVLLFPILYPNLFSPL) traverse the membrane as a helical; Signal-anchor for type II membrane protein segment. The N-linked (GlcNAc...) asparagine glycan is linked to asparagine 131. Substrate is bound at residue 302–304 (HLR). N-linked (GlcNAc...) asparagine glycosylation is found at asparagine 373 and asparagine 474.

The protein belongs to the glycosyltransferase GT106 family.

It is found in the membrane. It participates in glycan metabolism. This is O-fucosyltransferase 31 from Arabidopsis thaliana (Mouse-ear cress).